A 613-amino-acid polypeptide reads, in one-letter code: Zinc metalloproteinase-disintegrin-like MTP4 (613 aa).

The first 20 residues, 1 to 20 (MIEVLLVTICFTVFPYQGSS), serve as a signal peptide directing secretion. Positions 21–191 (IILESGNVND…DEPIEKISQL (171 aa)) are excised as a propeptide. The 197-residue stretch at 205-401 (KYIELYVVVD…VRPQCILNKP (197 aa)) folds into the Peptidase M12B domain. Residue E208 coordinates Ca(2+). N282 is a glycosylation site (N-linked (GlcNAc...) asparagine). A Ca(2+)-binding site is contributed by D292. Disulfide bonds link C316-C396, C356-C380, and C358-C363. Zn(2+) is bound by residues H341, H345, and H351. 7 residues coordinate Ca(2+): C396, N399, N414, F416, E418, E421, and D424. Residues 409-495 (PPVCGNYFVE…KCPTDSFQRN (87 aa)) enclose the Disintegrin domain. 15 disulfide bridges follow: C412–C441, C423–C436, C425–C431, C435–C458, C449–C455, C454–C480, C467–C487, C474–C506, C499–C511, C518–C568, C533–C575, C543–C577, C546–C556, C563–C601, and C595–C606. A glycan (N-linked (GlcNAc...) asparagine) is linked at N437. The short motif at 473-475 (DCD) is the D/ECD-tripeptide element. Residues D475, L476, E478, and D490 each contribute to the Ca(2+) site. The hypervariable region that may play important roles toward cell migration stretch occupies residues 561–574 (KMCGKLLCEKGNAT). N572 carries N-linked (GlcNAc...) asparagine glycosylation.

This sequence belongs to the venom metalloproteinase (M12B) family. P-III subfamily. Monomer. Zn(2+) serves as cofactor. As to expression, expressed by the venom gland.

The protein resides in the secreted. Functionally, snake venom zinc metalloproteinase that may impair hemostasis in the prey. This Drysdalia coronoides (White-lipped snake) protein is Zinc metalloproteinase-disintegrin-like MTP4.